An 86-amino-acid polypeptide reads, in one-letter code: Cell division topological specificity factor (86 aa).

This sequence belongs to the MinE family.

Prevents the cell division inhibition by proteins MinC and MinD at internal division sites while permitting inhibition at polar sites. This ensures cell division at the proper site by restricting the formation of a division septum at the midpoint of the long axis of the cell. This Shewanella woodyi (strain ATCC 51908 / MS32) protein is Cell division topological specificity factor.